The following is a 308-amino-acid chain: Urease accessory protein UreD (308 aa).

The protein belongs to the UreD family. UreD, UreF and UreG form a complex that acts as a GTP-hydrolysis-dependent molecular chaperone, activating the urease apoprotein by helping to assemble the nickel containing metallocenter of UreC. The UreE protein probably delivers the nickel.

The protein resides in the cytoplasm. Required for maturation of urease via the functional incorporation of the urease nickel metallocenter. This Psychromonas ingrahamii (strain DSM 17664 / CCUG 51855 / 37) protein is Urease accessory protein UreD.